The primary structure comprises 175 residues: Gamma-crystallin B (175 aa).

Beta/gamma crystallin 'Greek key' domains follow at residues 2 to 40 (GKIT…RVDS) and 41 to 83 (GCWM…RLIP). Residues 84-88 (QHSGT) form a connecting peptide region. Beta/gamma crystallin 'Greek key' domains lie at 89–129 (FRMR…NVLD) and 130–172 (GCWV…RRVM).

This sequence belongs to the beta/gamma-crystallin family. Monomer.

In terms of biological role, crystallins are the dominant structural components of the vertebrate eye lens. In Canis lupus familiaris (Dog), this protein is Gamma-crystallin B (CRYGB).